We begin with the raw amino-acid sequence, 466 residues long: Soluble pyridine nucleotide transhydrogenase (466 aa).

Residue 36–45 participates in FAD binding; it reads ERYHNVGGGC.

This sequence belongs to the class-I pyridine nucleotide-disulfide oxidoreductase family. It depends on FAD as a cofactor.

It localises to the cytoplasm. The enzyme catalyses NAD(+) + NADPH = NADH + NADP(+). In terms of biological role, conversion of NADPH, generated by peripheral catabolic pathways, to NADH, which can enter the respiratory chain for energy generation. The polypeptide is Soluble pyridine nucleotide transhydrogenase (Klebsiella pneumoniae subsp. pneumoniae (strain ATCC 700721 / MGH 78578)).